Consider the following 1011-residue polypeptide: Collagen alpha-2(I) chain (1011 aa).

Positions Ser1–Ala1011 are disordered. 4-hydroxyproline is present on residues Pro10, Pro13, Pro35, and Pro41. Over residues Leu28–Pro67 the composition is skewed to low complexity. Lys106 is subject to 5-hydroxylysine; alternate. Lys106 carries O-linked (Gal...) hydroxylysine; alternate glycosylation. The segment covering Ser167 to Pro182 has biased composition (low complexity). The span at Gly282–Gly291 shows a compositional bias: gly residues. Over residues Ser292 to Ser302 the composition is skewed to low complexity. The span at Gly323–Gly332 shows a compositional bias: gly residues. Residues Pro345–Ser361 show a composition bias toward low complexity. A 4-hydroxyproline mark is found at Pro367 and Pro370. Over residues Leu396–Ala415 the composition is skewed to low complexity. Over residues Gly464–Gly473 the composition is skewed to gly residues. Low complexity-rich tracts occupy residues Pro520–Pro537 and Glu549–Ala559. A compositionally biased stretch (gly residues) spans Gly560–Gly578. Low complexity-rich tracts occupy residues Arg588 to Ser635 and Val642 to Ala662. Positions Lys663–Lys672 are enriched in basic and acidic residues. Over residues Pro680–Ala690 the composition is skewed to low complexity. Positions Gly700 to Gly709 are enriched in gly residues. The segment covering Thr711 to Thr720 has biased composition (low complexity). Gly residues predominate over residues Gly757–Gly766. Low complexity-rich tracts occupy residues Ser774 to Pro801 and Leu809 to Pro819. The segment covering Gly820–Leu834 has biased composition (gly residues). Composition is skewed to low complexity over residues Tyr843–Pro856 and Glu872–Pro887. Residues Arg897–Pro908 show a composition bias toward basic and acidic residues. The span at Ser981–Pro993 shows a compositional bias: pro residues.

Belongs to the fibrillar collagen family. As to quaternary structure, trimers of one alpha 2(I) and two alpha 1(I) chains. Interacts (via C-terminus) with TMEM131 (via PapD-L domain); the interaction is direct and is involved in assembly and TRAPPIII ER-to-Golgi transport complex-dependent secretion of collagen. In terms of processing, prolines at the third position of the tripeptide repeating unit (G-X-Y) are hydroxylated in some or all of the chains. As to expression, expressed in bones.

The protein resides in the secreted. It localises to the extracellular space. The protein localises to the extracellular matrix. Its function is as follows. Type I collagen is a member of group I collagen (fibrillar forming collagen). The sequence is that of Collagen alpha-2(I) chain from Neocnus comes (Miller's Hispaniolan ground sloth).